The primary structure comprises 368 residues: DNA replication and repair protein RecF (368 aa).

Gly30 to Thr37 is an ATP binding site.

Belongs to the RecF family.

Its subcellular location is the cytoplasm. In terms of biological role, the RecF protein is involved in DNA metabolism; it is required for DNA replication and normal SOS inducibility. RecF binds preferentially to single-stranded, linear DNA. It also seems to bind ATP. The sequence is that of DNA replication and repair protein RecF from Streptococcus pyogenes serotype M49 (strain NZ131).